The following is a 292-amino-acid chain: MGNTYCILGGCIEQASVGVVERWGRFEHIAEPGCHFFNPLAGQWLAGVLSTRIKSLDVKIETKTKDNVFVQLVCSIQYRVVKASADDAFYELQNPKEQIQAYVFDVVRALVPMMTLDALFEQKGEVAKSVLEELEKVMGAYGYSIEHILMVDIIPDPSVRKAMNEINAAQRLQLASVYKGEAEKILQVKRAEAEAEAKYLGGVGVARQRQAITDGLRENILNFSDKVEGTSAKEVMDLIMITQYFDTIRDLGNSSKNTTVFLPHGPGHVRDISDQIRNGMMEAAASTQVNDV.

The N-myristoyl glycine moiety is linked to residue G2.

In terms of assembly, self-interacts and forms heteromers. Interacts with NB-LRR class of R proteins before R proteins (e.g. RPS2 or RPM1) are activated by the effectors.

The protein localises to the cell membrane. This chain is Hypersensitive-induced response protein 4 (HIR4), found in Arabidopsis thaliana (Mouse-ear cress).